A 227-amino-acid chain; its full sequence is uncharacterized protein (227 aa).

Residues Asn52 to Asn100 adopt a coiled-coil conformation.

Belongs to the mimivirus L246/L426 family.

This is an uncharacterized protein from Acanthamoeba polyphaga mimivirus (APMV).